A 202-amino-acid chain; its full sequence is High mobility group protein B3 (202 aa).

2 consecutive DNA-binding regions (HMG box) follow at residues 9–79 and 93–161; these read PKGK…KDYG and PKRP…ADYK. Cysteine sulfonic acid (-SO3H); alternate occurs at positions 23 and 45. Cysteine 23 and cysteine 45 are oxidised to a cystine. The disordered stretch occupies residues 71-98; it reads YDREMKDYGPAKGGKKKKDPNAPKRPPS. Residue cysteine 104 is modified to Cysteine sulfonic acid (-SO3H). Positions 161–202 are disordered; it reads KSKGKFDGAKGAATKAARKKVEEEDEEEEEDEEEEDEDDDDE. Residues 183–202 are compositionally biased toward acidic residues; sequence EEDEEEEEDEEEEDEDDDDE.

This sequence belongs to the HMGB family. Reduction/oxidation of cysteine residues Cys-23, Cys-45 and Cys-104 and a possible intramolecular disulfide bond involving Cys-23 and Cys-45 give rise to different redox forms with specific functional activities in various cellular compartments: 1- fully reduced HMGB3 (HMGB3C23hC45hC104h), 2- disulfide HMGB3 (HMGB3C23-C45C104h) and 3- sulfonyl HMGB3 (HMGB3C23soC45soC104so).

The protein localises to the nucleus. The protein resides in the chromosome. It localises to the cytoplasm. Multifunctional protein with various roles in different cellular compartments. May act in a redox sensitive manner. Associates with chromatin and binds DNA with a preference for non-canonical DNA structures such as single-stranded DNA. Can bend DNA and enhance DNA flexibility by looping thus providing a mechanism to promote activities on various gene promoters. Binds to the delta-1 crystallin/ASL1 enhancer. Proposed to be involved in the innate immune response to nucleic acids by acting as a cytoplasmic promiscuous immunogenic DNA/RNA sensor. The chain is High mobility group protein B3 (HMGB3) from Gallus gallus (Chicken).